Consider the following 109-residue polypeptide: Flagellar hook-basal body complex protein FliE (109 aa).

It belongs to the FliE family.

It is found in the bacterial flagellum basal body. The chain is Flagellar hook-basal body complex protein FliE from Pseudomonas aeruginosa (strain LESB58).